A 242-amino-acid chain; its full sequence is Triosephosphate isomerase (242 aa).

Residue 8-10 (NWK) coordinates substrate. His91 acts as the Electrophile in catalysis. The active-site Proton acceptor is Glu155. Gly161 and Ser192 together coordinate substrate.

Belongs to the triosephosphate isomerase family. As to quaternary structure, homodimer.

The protein localises to the cytoplasm. The enzyme catalyses D-glyceraldehyde 3-phosphate = dihydroxyacetone phosphate. Its pathway is carbohydrate biosynthesis; gluconeogenesis. It functions in the pathway carbohydrate degradation; glycolysis; D-glyceraldehyde 3-phosphate from glycerone phosphate: step 1/1. Its function is as follows. Involved in the gluconeogenesis. Catalyzes stereospecifically the conversion of dihydroxyacetone phosphate (DHAP) to D-glyceraldehyde-3-phosphate (G3P). This Wolbachia pipientis wMel protein is Triosephosphate isomerase.